We begin with the raw amino-acid sequence, 101 residues long: Trp operon repressor homolog (101 aa).

The DNA-binding element occupies 59–82 (QREIQQNLNTSAATITRGSNMLKL).

The protein belongs to the TrpR family. In terms of assembly, homodimer.

It is found in the cytoplasm. This protein is an aporepressor. When complexed with L-tryptophan it binds the operator region of the trp operon and prevents the initiation of transcription. In Mannheimia succiniciproducens (strain KCTC 0769BP / MBEL55E), this protein is Trp operon repressor homolog.